Reading from the N-terminus, the 337-residue chain is Glycerol-3-phosphate dehydrogenase [NAD(P)+] (337 aa).

Positions 11, 30, and 102 each coordinate NADPH. Positions 102, 138, and 140 each coordinate sn-glycerol 3-phosphate. An NADPH-binding site is contributed by A142. 5 residues coordinate sn-glycerol 3-phosphate: K193, D246, S256, R257, and N258. The Proton acceptor role is filled by K193. NADPH is bound at residue R257. V281 and E283 together coordinate NADPH.

Belongs to the NAD-dependent glycerol-3-phosphate dehydrogenase family.

The protein resides in the cytoplasm. The enzyme catalyses sn-glycerol 3-phosphate + NAD(+) = dihydroxyacetone phosphate + NADH + H(+). It carries out the reaction sn-glycerol 3-phosphate + NADP(+) = dihydroxyacetone phosphate + NADPH + H(+). The protein operates within membrane lipid metabolism; glycerophospholipid metabolism. In terms of biological role, catalyzes the reduction of the glycolytic intermediate dihydroxyacetone phosphate (DHAP) to sn-glycerol 3-phosphate (G3P), the key precursor for phospholipid synthesis. This chain is Glycerol-3-phosphate dehydrogenase [NAD(P)+], found in Variovorax paradoxus (strain S110).